The following is a 264-amino-acid chain: RNA-binding protein pos-1 (264 aa).

A disordered region spans residues 56–82; that stretch reads QDKETQNSASQPTSEQSLANRDPCTVP. A compositionally biased stretch (polar residues) spans 61–74; the sequence is QNSASQPTSEQSLA. C3H1-type zinc fingers lie at residues 98 to 126 and 141 to 169; these read AFKTALCDAYKRSQACSYGDQCRFAHGVH and KYKTVLCDKFSMTGNCKYGTRCQFIHKIV. The Zn(2+) site is built by Cys-104, Cys-113, Cys-119, His-123, Cys-147, Cys-156, Cys-162, and His-166.

In terms of assembly, monomer.

It is found in the cytoplasm. In terms of biological role, RNA-binding protein that coordinates cell fate specification and differentiation during early embryogenesis. Binds to a consensus pos-1 recognition element (PRE) consisting of the sequence 5'-UA(U 2-3)RGD(N 1-3)G-3', where R is any purine, D is A, G, or U, and N is any base. The PRE motif is found within the 3' untranslated region of many maternal transcripts required for early development. Binds to the 3' untranslated region (UTR) of Notch receptor homolog glp-1, thereby repressing glp-1 translation in the posterior blastomeres in the embryo. Binding to glp-1 3' UTR excludes cell fate regulator gld-1 binding to an overlapping binding site in the glp-1 3' UTR. Binds to the neg-1 3'UTR thereby opposing neg-1 expression and cytoplasmic polyadenylation of the neg-1 mRNA poly(A) tail promoted by gld-2 and gld-3. By inhibiting the cytoplasmic lengthening of neg-1 mRNA, restricts the accumulation of neg-1 protein and promotes endo-mesoderm development in anterior blastomeres. Essential for germline specification. The polypeptide is RNA-binding protein pos-1 (Caenorhabditis elegans).